The primary structure comprises 928 residues: Probable outer membrane protein pmp10 (928 aa).

The signal sequence occupies residues 1-25 (MKSQFSWLVLSSTLACFTSCSTVFA). The Autotransporter domain occupies 635–928 (TLCSDRGFWA…NVDLGGKFQF (294 aa)).

It belongs to the PMP outer membrane protein family.

The protein resides in the secreted. It localises to the cell wall. It is found in the cell outer membrane. The polypeptide is Probable outer membrane protein pmp10 (pmp10) (Chlamydia pneumoniae (Chlamydophila pneumoniae)).